The sequence spans 3459 residues: uncharacterized protein (3459 aa).

Acidic residues predominate over residues 158 to 167 (NDDDWIFNED). Disordered regions lie at residues 158–230 (NDDD…NNNN) and 400–447 (YGYI…NDEK). The span at 168–184 (DEKKNKNNDGNDNRYDY) shows a compositional bias: basic and acidic residues. Low complexity predominate over residues 185-201 (NDLQNNNNNDNNKYDYN). Residues 204-221 (DDEKKNKNNDGDDNKYDY) are compositionally biased toward basic and acidic residues. Over residues 406-443 (DNDDGDDYNDDNDNDDNYNDDNYNDDNYNDDNYNDDNY) the composition is skewed to acidic residues. Residues 771 to 851 (VNEKKKGENE…NEMNKDEENE (81 aa)) are a coiled coil. Residues 1059–1079 (LIYMIYLFFTYKKYDLLLMFI) traverse the membrane as a helical segment. Disordered regions lie at residues 1148–1187 (RRQE…NDYD), 1399–1467 (IPTQ…NDDD), and 1711–1733 (QKKK…NKEN). Basic and acidic residues predominate over residues 1404 to 1463 (DKNETDEGNKNETDEGDKNETDEGDKNETDEGNKNETEEIYKNETDEGNKNETEEIYKND). 2 helical membrane-spanning segments follow: residues 2059–2079 (FLLF…IFFF) and 2197–2217 (IIQC…DFLF). Disordered stretches follow at residues 2582–2644 (IYKD…DNNN) and 2776–2835 (GRIW…DKGD). Residues 2592–2629 (DNNDDDNINDDDNINDDDNINDDDNNNDDDNNNDDNND) show a composition bias toward acidic residues. The span at 2779-2821 (WKREENGEKKKNEKNESEKNERNEKNEKNEKHEKHEKHEKNEK) shows a compositional bias: basic and acidic residues. Positions 2785 to 2820 (GEKKKNEKNESEKNERNEKNEKNEKHEKHEKHEKNE) form a coiled coil. 2 consecutive transmembrane segments (helical) span residues 3229–3249 (LFII…SFIL) and 3296–3316 (LLFF…NINS).

It localises to the membrane. This is an uncharacterized protein from Plasmodium falciparum (isolate 3D7).